The sequence spans 185 residues: Signal peptidase I P (185 aa).

Residues 1–14 (MFDKEKRKKSNIID) lie on the Cytoplasmic side of the membrane. The helical transmembrane segment at 15-34 (WIKAILIALILVFLVRTFLF) threads the bilayer. Residues 35-185 (EPYIVQGESM…FPLDRIRHAK (151 aa)) lie on the Extracellular side of the membrane. Active-site residues include S43 and K85.

The protein belongs to the peptidase S26 family.

Its subcellular location is the cell membrane. The enzyme catalyses Cleavage of hydrophobic, N-terminal signal or leader sequences from secreted and periplasmic proteins.. This chain is Signal peptidase I P (sipP), found in Bacillus subtilis subsp. natto.